Consider the following 74-residue polypeptide: Large ribosomal subunit protein bL31 (74 aa).

Residues Cys16, Cys18, Cys38, and Cys41 each contribute to the Zn(2+) site.

The protein belongs to the bacterial ribosomal protein bL31 family. Type A subfamily. Part of the 50S ribosomal subunit. The cofactor is Zn(2+).

In terms of biological role, binds the 23S rRNA. This Salinispora arenicola (strain CNS-205) protein is Large ribosomal subunit protein bL31.